The following is a 113-amino-acid chain: Putative pterin-4-alpha-carbinolamine dehydratase (113 aa).

Belongs to the pterin-4-alpha-carbinolamine dehydratase family.

The enzyme catalyses (4aS,6R)-4a-hydroxy-L-erythro-5,6,7,8-tetrahydrobiopterin = (6R)-L-erythro-6,7-dihydrobiopterin + H2O. This Bordetella bronchiseptica (strain ATCC BAA-588 / NCTC 13252 / RB50) (Alcaligenes bronchisepticus) protein is Putative pterin-4-alpha-carbinolamine dehydratase.